A 716-amino-acid chain; its full sequence is 1,4-alpha-glucan branching enzyme GlgB (716 aa).

Residue D399 is the Nucleophile of the active site. Residue E452 is the Proton donor of the active site.

It belongs to the glycosyl hydrolase 13 family. GlgB subfamily. As to quaternary structure, monomer.

It carries out the reaction Transfers a segment of a (1-&gt;4)-alpha-D-glucan chain to a primary hydroxy group in a similar glucan chain.. Its pathway is glycan biosynthesis; glycogen biosynthesis. In terms of biological role, catalyzes the formation of the alpha-1,6-glucosidic linkages in glycogen by scission of a 1,4-alpha-linked oligosaccharide from growing alpha-1,4-glucan chains and the subsequent attachment of the oligosaccharide to the alpha-1,6 position. The polypeptide is 1,4-alpha-glucan branching enzyme GlgB (Rhodopseudomonas palustris (strain HaA2)).